Consider the following 410-residue polypeptide: LL-diaminopimelate aminotransferase (410 aa).

Positions 15 and 42 each coordinate substrate. Pyridoxal 5'-phosphate-binding positions include Tyr-72, 108–109 (SK), Tyr-132, Asn-187, Tyr-218, and 246–248 (SFS). Residues Lys-109, Tyr-132, and Asn-187 each coordinate substrate. The residue at position 249 (Lys-249) is an N6-(pyridoxal phosphate)lysine. Residues Arg-257 and Asn-292 each contribute to the pyridoxal 5'-phosphate site. Asn-292 and Arg-388 together coordinate substrate.

It belongs to the class-I pyridoxal-phosphate-dependent aminotransferase family. LL-diaminopimelate aminotransferase subfamily. As to quaternary structure, homodimer. Pyridoxal 5'-phosphate serves as cofactor.

The catalysed reaction is (2S,6S)-2,6-diaminopimelate + 2-oxoglutarate = (S)-2,3,4,5-tetrahydrodipicolinate + L-glutamate + H2O + H(+). The protein operates within amino-acid biosynthesis; L-lysine biosynthesis via DAP pathway; LL-2,6-diaminopimelate from (S)-tetrahydrodipicolinate (aminotransferase route): step 1/1. Its function is as follows. Involved in the synthesis of meso-diaminopimelate (m-DAP or DL-DAP), required for both lysine and peptidoglycan biosynthesis. Catalyzes the direct conversion of tetrahydrodipicolinate to LL-diaminopimelate. In Geotalea uraniireducens (strain Rf4) (Geobacter uraniireducens), this protein is LL-diaminopimelate aminotransferase.